A 131-amino-acid polypeptide reads, in one-letter code: Maturin (131 aa).

Residues 107 to 120 (FEEYNADVEEEEPE) show a composition bias toward acidic residues. The interval 107-131 (FEEYNADVEEEEPEADHQQMGVSQQ) is disordered.

The protein belongs to the MTURN family.

It is found in the cytoplasm. Its function is as follows. Involved in early neuronal development; required for cell cycle exit and differentiation of primary neurons. Cooperates synergistically with pak3 to promote primary neural differentiation within the neural plate. May play a role in promoting megakaryocyte differentiation. The chain is Maturin (mturn) from Xenopus laevis (African clawed frog).